A 545-amino-acid chain; its full sequence is CTP synthase (545 aa).

The amidoligase domain stretch occupies residues 1–266 (MITNYIFVTG…DQYICDKFNL (266 aa)). Ser14 is a binding site for CTP. Ser14 is a binding site for UTP. Residues 15-20 (SLGKGI) and Asp72 each bind ATP. Residues Asp72 and Glu140 each contribute to the Mg(2+) site. Residues 147–149 (DIE), 187–192 (KTKPTQ), and Lys223 contribute to the CTP site. Residues 187-192 (KTKPTQ) and Lys223 contribute to the UTP site. 239–241 (KDV) contributes to the ATP binding site. Residues 291-542 (SIGMVGKYIE…VKSALAHHQD (252 aa)) enclose the Glutamine amidotransferase type-1 domain. Gly352 contributes to the L-glutamine binding site. Cys379 functions as the Nucleophile; for glutamine hydrolysis in the catalytic mechanism. Residues 380–383 (LGMQ), Glu403, and Arg470 each bind L-glutamine. Active-site residues include His515 and Glu517.

This sequence belongs to the CTP synthase family. In terms of assembly, homotetramer.

It catalyses the reaction UTP + L-glutamine + ATP + H2O = CTP + L-glutamate + ADP + phosphate + 2 H(+). It carries out the reaction L-glutamine + H2O = L-glutamate + NH4(+). The catalysed reaction is UTP + NH4(+) + ATP = CTP + ADP + phosphate + 2 H(+). It functions in the pathway pyrimidine metabolism; CTP biosynthesis via de novo pathway; CTP from UDP: step 2/2. Its activity is regulated as follows. Allosterically activated by GTP, when glutamine is the substrate; GTP has no effect on the reaction when ammonia is the substrate. The allosteric effector GTP functions by stabilizing the protein conformation that binds the tetrahedral intermediate(s) formed during glutamine hydrolysis. Inhibited by the product CTP, via allosteric rather than competitive inhibition. Functionally, catalyzes the ATP-dependent amination of UTP to CTP with either L-glutamine or ammonia as the source of nitrogen. Regulates intracellular CTP levels through interactions with the four ribonucleotide triphosphates. The sequence is that of CTP synthase from Hamiltonella defensa subsp. Acyrthosiphon pisum (strain 5AT).